The following is a 292-amino-acid chain: ATP synthase gamma chain (292 aa).

Belongs to the ATPase gamma chain family. In terms of assembly, F-type ATPases have 2 components, CF(1) - the catalytic core - and CF(0) - the membrane proton channel. CF(1) has five subunits: alpha(3), beta(3), gamma(1), delta(1), epsilon(1). CF(0) has three main subunits: a, b and c.

Its subcellular location is the cell inner membrane. Functionally, produces ATP from ADP in the presence of a proton gradient across the membrane. The gamma chain is believed to be important in regulating ATPase activity and the flow of protons through the CF(0) complex. The polypeptide is ATP synthase gamma chain (Nitrobacter winogradskyi (strain ATCC 25391 / DSM 10237 / CIP 104748 / NCIMB 11846 / Nb-255)).